We begin with the raw amino-acid sequence, 192 residues long: Pyruvate synthase subunit PorC (192 aa).

As to quaternary structure, heterotetramer of one alpha, one beta, one delta and one gamma chain.

The enzyme catalyses 2 oxidized [2Fe-2S]-[ferredoxin] + pyruvate + CoA = 2 reduced [2Fe-2S]-[ferredoxin] + acetyl-CoA + CO2 + H(+). The chain is Pyruvate synthase subunit PorC (porC) from Thermotoga maritima (strain ATCC 43589 / DSM 3109 / JCM 10099 / NBRC 100826 / MSB8).